We begin with the raw amino-acid sequence, 326 residues long: Putative nickel insertion protein (326 aa).

The protein belongs to the LarC family.

In Enterococcus faecalis (strain ATCC 700802 / V583), this protein is Putative nickel insertion protein.